We begin with the raw amino-acid sequence, 474 residues long: F420-non-reducing hydrogenase vhc subunit A (474 aa).

Residues Cys-61, Cys-64, Cys-445, and Cys-448 each coordinate Ni(2+).

The protein belongs to the [NiFe]/[NiFeSe] hydrogenase large subunit family. The F420-non-reducing hydrogenase vhc is composed of three subunits; VhcA, VhcD and VhcG. Ni(2+) serves as cofactor.

In Methanococcus voltae, this protein is F420-non-reducing hydrogenase vhc subunit A (vhcA).